A 227-amino-acid chain; its full sequence is Cytochrome c oxidase subunit 2 (227 aa).

Residues 1–14 are Mitochondrial intermembrane-facing; it reads MAHPVQLGLQDATS. A helical membrane pass occupies residues 15 to 45; that stretch reads PVMEELITFHDYALMTISLISFLVLYALFST. Topologically, residues 46 to 59 are mitochondrial matrix; that stretch reads LTTKLTNTNITDAQ. The helical transmembrane segment at 60-87 threads the bilayer; sequence EMETTWTILPAVILILIALPSLRILYLT. Residues 88–227 lie on the Mitochondrial intermembrane side of the membrane; it reads DEINNPSFTI…IFEMGPVFTL (140 aa). Residues histidine 161, cysteine 196, glutamate 198, cysteine 200, histidine 204, and methionine 207 each coordinate Cu cation. Glutamate 198 is a Mg(2+) binding site.

It belongs to the cytochrome c oxidase subunit 2 family. Component of the cytochrome c oxidase (complex IV, CIV), a multisubunit enzyme composed of 14 subunits. The complex is composed of a catalytic core of 3 subunits MT-CO1, MT-CO2 and MT-CO3, encoded in the mitochondrial DNA, and 11 supernumerary subunits COX4I, COX5A, COX5B, COX6A, COX6B, COX6C, COX7A, COX7B, COX7C, COX8 and NDUFA4, which are encoded in the nuclear genome. The complex exists as a monomer or a dimer and forms supercomplexes (SCs) in the inner mitochondrial membrane with NADH-ubiquinone oxidoreductase (complex I, CI) and ubiquinol-cytochrome c oxidoreductase (cytochrome b-c1 complex, complex III, CIII), resulting in different assemblies (supercomplex SCI(1)III(2)IV(1) and megacomplex MCI(2)III(2)IV(2)). Found in a complex with TMEM177, COA6, COX18, COX20, SCO1 and SCO2. Interacts with TMEM177 in a COX20-dependent manner. Interacts with COX20. Interacts with COX16. It depends on Cu cation as a cofactor.

The protein resides in the mitochondrion inner membrane. It carries out the reaction 4 Fe(II)-[cytochrome c] + O2 + 8 H(+)(in) = 4 Fe(III)-[cytochrome c] + 2 H2O + 4 H(+)(out). In terms of biological role, component of the cytochrome c oxidase, the last enzyme in the mitochondrial electron transport chain which drives oxidative phosphorylation. The respiratory chain contains 3 multisubunit complexes succinate dehydrogenase (complex II, CII), ubiquinol-cytochrome c oxidoreductase (cytochrome b-c1 complex, complex III, CIII) and cytochrome c oxidase (complex IV, CIV), that cooperate to transfer electrons derived from NADH and succinate to molecular oxygen, creating an electrochemical gradient over the inner membrane that drives transmembrane transport and the ATP synthase. Cytochrome c oxidase is the component of the respiratory chain that catalyzes the reduction of oxygen to water. Electrons originating from reduced cytochrome c in the intermembrane space (IMS) are transferred via the dinuclear copper A center (CU(A)) of subunit 2 and heme A of subunit 1 to the active site in subunit 1, a binuclear center (BNC) formed by heme A3 and copper B (CU(B)). The BNC reduces molecular oxygen to 2 water molecules using 4 electrons from cytochrome c in the IMS and 4 protons from the mitochondrial matrix. The sequence is that of Cytochrome c oxidase subunit 2 (MT-CO2) from Chlorocebus aethiops (Green monkey).